The following is a 198-amino-acid chain: Large ribosomal subunit protein bL12m (198 aa).

The N-terminal 36 residues, 1-36, are a transit peptide targeting the mitochondrion; it reads MLPSATSLLRGPCLGLRAAALRLVRQQVPHVCAVRL. Positions 106-115 are enriched in low complexity; that stretch reads GAAPAPTAPE. The interval 106-126 is disordered; it reads GAAPAPTAPEAAEEDVPKQKE. Lys-125, Lys-138, Lys-142, and Lys-144 each carry N6-acetyllysine. An N6-acetyllysine; alternate modification is found at Lys-150. N6-succinyllysine; alternate is present on Lys-150. A Glycyl lysine isopeptide (Lys-Gly) (interchain with G-Cter in ubiquitin) cross-link involves residue Lys-150. Lys-162 is modified (N6-succinyllysine). Residues Lys-163 and Lys-173 each carry the N6-acetyllysine modification. Lys-178 is subject to N6-acetyllysine; alternate. Lys-178 bears the N6-succinyllysine; alternate mark. Lys-185 is modified (N6-acetyllysine).

The protein belongs to the bacterial ribosomal protein bL12 family. In terms of assembly, component of the mitochondrial ribosome large subunit (39S) which comprises a 16S rRNA and about 50 distinct proteins. Interacts with NOA1. Two mature forms are produced by differential two-step proteolytic cleavage. Cleaved by the mitochondrial processing protease to produce the long mature form and subsequently by the mitochondrial intermediate protease to produce the short mature form. Post-translationally, in the presence of CUL3, undergoes 'Lys-63'-linked ubiquitination at Lys-150 which results in proteasomal degradation.

It is found in the mitochondrion matrix. Its function is as follows. As a component of the mitochondrial large ribosomal subunit, plays a role in mitochondrial translation. When present in mitochondria as a free protein not associated with the ribosome, associates with mitochondrial RNA polymerase POLRMT to activate transcription. Required for POLRMT stability. This Bos taurus (Bovine) protein is Large ribosomal subunit protein bL12m (MRPL12).